Reading from the N-terminus, the 143-residue chain is Large ribosomal subunit protein uL16 (143 aa).

Residues 1-26 form a disordered region; the sequence is MSMALLPRRVKYRKSQRGSRKGNATR. Over residues 8–20 the composition is skewed to basic residues; the sequence is RRVKYRKSQRGSR.

It belongs to the universal ribosomal protein uL16 family. Part of the 50S ribosomal subunit.

Binds 23S rRNA and is also seen to make contacts with the A and possibly P site tRNAs. The polypeptide is Large ribosomal subunit protein uL16 (Methylacidiphilum infernorum (isolate V4) (Methylokorus infernorum (strain V4))).